The chain runs to 521 residues: 2,3-bisphosphoglycerate-independent phosphoglycerate mutase 2 (521 aa).

The Mn(2+) site is built by D20 and S70. S70 functions as the Phosphoserine intermediate in the catalytic mechanism. Substrate-binding positions include H131, 161-162 (RD), R193, R199, 270-273 (RPDR), and K343. D410, H414, D451, H452, and H470 together coordinate Mn(2+).

It belongs to the BPG-independent phosphoglycerate mutase family. Requires Mn(2+) as cofactor.

It carries out the reaction (2R)-2-phosphoglycerate = (2R)-3-phosphoglycerate. Its pathway is carbohydrate degradation; glycolysis; pyruvate from D-glyceraldehyde 3-phosphate: step 3/5. In terms of biological role, catalyzes the interconversion of 2-phosphoglycerate and 3-phosphoglycerate. In Methanosarcina acetivorans (strain ATCC 35395 / DSM 2834 / JCM 12185 / C2A), this protein is 2,3-bisphosphoglycerate-independent phosphoglycerate mutase 2.